We begin with the raw amino-acid sequence, 351 residues long: Protein-glutamate methylesterase/protein-glutamine glutaminase 2 (351 aa).

The 118-residue stretch at 5–122 folds into the Response regulatory domain; that stretch reads RVICVDDSAL…RDGLLDYSEL (118 aa). Residue Asp56 is modified to 4-aspartylphosphate. Residues 154-341 enclose the CheB-type methylesterase domain; the sequence is LNSSEKLVIL…PLPAMSERIL (188 aa). Active-site residues include Ser166, His192, and Asp289.

Belongs to the CheB family. Post-translationally, phosphorylated by CheA. Phosphorylation of the N-terminal regulatory domain activates the methylesterase activity.

The protein resides in the cytoplasm. The catalysed reaction is [protein]-L-glutamate 5-O-methyl ester + H2O = L-glutamyl-[protein] + methanol + H(+). It carries out the reaction L-glutaminyl-[protein] + H2O = L-glutamyl-[protein] + NH4(+). Involved in chemotaxis. Part of a chemotaxis signal transduction system that modulates chemotaxis in response to various stimuli. Catalyzes the demethylation of specific methylglutamate residues introduced into the chemoreceptors (methyl-accepting chemotaxis proteins or MCP) by CheR. Also mediates the irreversible deamidation of specific glutamine residues to glutamic acid. The chain is Protein-glutamate methylesterase/protein-glutamine glutaminase 2 from Bordetella avium (strain 197N).